The primary structure comprises 216 residues: Pyrophosphatase PpaX (216 aa).

Asp9 acts as the Nucleophile in catalysis.

This sequence belongs to the HAD-like hydrolase superfamily. PpaX family. Mg(2+) is required as a cofactor.

It carries out the reaction diphosphate + H2O = 2 phosphate + H(+). Its function is as follows. Hydrolyzes pyrophosphate formed during P-Ser-HPr dephosphorylation by HPrK/P. Might play a role in controlling the intracellular pyrophosphate pool. In Bacillus cereus (strain B4264), this protein is Pyrophosphatase PpaX.